Reading from the N-terminus, the 849-residue chain is DNA mismatch repair protein MutS (849 aa).

Position 602–609 (602–609) interacts with ATP; it reads GPNMSGKS.

The protein belongs to the DNA mismatch repair MutS family.

In terms of biological role, this protein is involved in the repair of mismatches in DNA. It is possible that it carries out the mismatch recognition step. This protein has a weak ATPase activity. The sequence is that of DNA mismatch repair protein MutS from Streptococcus mutans serotype c (strain ATCC 700610 / UA159).